Here is a 209-residue protein sequence, read N- to C-terminus: Thiamine-phosphate synthase (209 aa).

Residues 37-41 (QLREK) and asparagine 69 contribute to the 4-amino-2-methyl-5-(diphosphooxymethyl)pyrimidine site. Mg(2+) contacts are provided by aspartate 70 and aspartate 89. 4-amino-2-methyl-5-(diphosphooxymethyl)pyrimidine is bound at residue serine 108. 134–136 (TNT) serves as a coordination point for 2-[(2R,5Z)-2-carboxy-4-methylthiazol-5(2H)-ylidene]ethyl phosphate. 4-amino-2-methyl-5-(diphosphooxymethyl)pyrimidine is bound at residue lysine 137. 2-[(2R,5Z)-2-carboxy-4-methylthiazol-5(2H)-ylidene]ethyl phosphate contacts are provided by residues glycine 164 and 184–185 (VS).

This sequence belongs to the thiamine-phosphate synthase family. Mg(2+) is required as a cofactor.

The catalysed reaction is 2-[(2R,5Z)-2-carboxy-4-methylthiazol-5(2H)-ylidene]ethyl phosphate + 4-amino-2-methyl-5-(diphosphooxymethyl)pyrimidine + 2 H(+) = thiamine phosphate + CO2 + diphosphate. It carries out the reaction 2-(2-carboxy-4-methylthiazol-5-yl)ethyl phosphate + 4-amino-2-methyl-5-(diphosphooxymethyl)pyrimidine + 2 H(+) = thiamine phosphate + CO2 + diphosphate. The enzyme catalyses 4-methyl-5-(2-phosphooxyethyl)-thiazole + 4-amino-2-methyl-5-(diphosphooxymethyl)pyrimidine + H(+) = thiamine phosphate + diphosphate. Its pathway is cofactor biosynthesis; thiamine diphosphate biosynthesis; thiamine phosphate from 4-amino-2-methyl-5-diphosphomethylpyrimidine and 4-methyl-5-(2-phosphoethyl)-thiazole: step 1/1. Condenses 4-methyl-5-(beta-hydroxyethyl)thiazole monophosphate (THZ-P) and 2-methyl-4-amino-5-hydroxymethyl pyrimidine pyrophosphate (HMP-PP) to form thiamine monophosphate (TMP). The sequence is that of Thiamine-phosphate synthase from Methanobrevibacter smithii (strain ATCC 35061 / DSM 861 / OCM 144 / PS).